The following is a 62-amino-acid chain: Large ribosomal subunit protein uL30 (62 aa).

Belongs to the universal ribosomal protein uL30 family. As to quaternary structure, part of the 50S ribosomal subunit.

This Shouchella clausii (strain KSM-K16) (Alkalihalobacillus clausii) protein is Large ribosomal subunit protein uL30.